The primary structure comprises 339 residues: Phosphoribosylformylglycinamidine cyclo-ligase (339 aa).

This sequence belongs to the AIR synthase family.

The protein resides in the cytoplasm. The catalysed reaction is 2-formamido-N(1)-(5-O-phospho-beta-D-ribosyl)acetamidine + ATP = 5-amino-1-(5-phospho-beta-D-ribosyl)imidazole + ADP + phosphate + H(+). It functions in the pathway purine metabolism; IMP biosynthesis via de novo pathway; 5-amino-1-(5-phospho-D-ribosyl)imidazole from N(2)-formyl-N(1)-(5-phospho-D-ribosyl)glycinamide: step 2/2. The chain is Phosphoribosylformylglycinamidine cyclo-ligase from Streptococcus thermophilus (strain ATCC BAA-491 / LMD-9).